The chain runs to 377 residues: 4-hydroxy-3-methylbut-2-en-1-yl diphosphate synthase (flavodoxin) (377 aa).

[4Fe-4S] cluster is bound by residues cysteine 270, cysteine 273, cysteine 305, and glutamate 312.

It belongs to the IspG family. Requires [4Fe-4S] cluster as cofactor.

It catalyses the reaction (2E)-4-hydroxy-3-methylbut-2-enyl diphosphate + oxidized [flavodoxin] + H2O + 2 H(+) = 2-C-methyl-D-erythritol 2,4-cyclic diphosphate + reduced [flavodoxin]. Its pathway is isoprenoid biosynthesis; isopentenyl diphosphate biosynthesis via DXP pathway; isopentenyl diphosphate from 1-deoxy-D-xylulose 5-phosphate: step 5/6. In terms of biological role, converts 2C-methyl-D-erythritol 2,4-cyclodiphosphate (ME-2,4cPP) into 1-hydroxy-2-methyl-2-(E)-butenyl 4-diphosphate. The chain is 4-hydroxy-3-methylbut-2-en-1-yl diphosphate synthase (flavodoxin) from Bacillus subtilis (strain 168).